Reading from the N-terminus, the 427-residue chain is SAC3 domain-containing protein 1 (427 aa).

Composition is skewed to basic and acidic residues over residues 1–10 (MGRFKGENRS) and 117–127 (ADPKRTVKEYS). Disordered stretches follow at residues 1–53 (MGRF…QDAV) and 101–143 (LHRL…LLRP). Pro residues predominate over residues 134–143 (PRPPPSLLRP). In terms of domain architecture, PCI spans 229–397 (QVQEGFGSLR…EGLPPPGAYH (169 aa)). Phosphoserine is present on Ser-425.

Belongs to the SAC3 family. In terms of assembly, may be part of a SEM1-containing complex. In terms of tissue distribution, present in spleen cells (at protein level).

Its subcellular location is the cytoplasm. It localises to the cytoskeleton. The protein localises to the microtubule organizing center. The protein resides in the centrosome. It is found in the spindle. Involved in centrosome duplication and mitotic progression. This is SAC3 domain-containing protein 1 (Sac3d1) from Mus musculus (Mouse).